The chain runs to 156 residues: Small ribosomal subunit protein uS7 (156 aa).

The protein belongs to the universal ribosomal protein uS7 family. In terms of assembly, part of the 30S ribosomal subunit. Contacts proteins S9 and S11.

In terms of biological role, one of the primary rRNA binding proteins, it binds directly to 16S rRNA where it nucleates assembly of the head domain of the 30S subunit. Is located at the subunit interface close to the decoding center, probably blocks exit of the E-site tRNA. The protein is Small ribosomal subunit protein uS7 of Shewanella loihica (strain ATCC BAA-1088 / PV-4).